The chain runs to 198 residues: Molybdopterin synthase catalytic subunit (198 aa).

Residues 1–27 (MASQPPQEPTPTATSTPSTSALASLPP) are compositionally biased toward low complexity. The interval 1 to 40 (MASQPPQEPTPTATSTPSTSALASLPPHLDPTTYPRTLTS) is disordered. Residues 143–144 (HR), Lys-159, and 166–168 (KRE) contribute to the substrate site. The disordered stretch occupies residues 176-198 (EWRENRERDAEGKVVAEKQEERE).

Belongs to the MoaE family. MOCS2B subfamily. In terms of assembly, heterotetramer; composed of 2 small (MOCS2A) and 2 large (MOCS2B) subunits.

Its subcellular location is the cytoplasm. The enzyme catalyses 2 [molybdopterin-synthase sulfur-carrier protein]-C-terminal-Gly-aminoethanethioate + cyclic pyranopterin phosphate + H2O = molybdopterin + 2 [molybdopterin-synthase sulfur-carrier protein]-C-terminal Gly-Gly + 2 H(+). It participates in cofactor biosynthesis; molybdopterin biosynthesis. Functionally, catalytic subunit of the molybdopterin synthase complex, a complex that catalyzes the conversion of precursor Z into molybdopterin. Acts by mediating the incorporation of 2 sulfur atoms from thiocarboxylated MOCS2A into precursor Z to generate a dithiolene group. This is Molybdopterin synthase catalytic subunit from Aspergillus clavatus (strain ATCC 1007 / CBS 513.65 / DSM 816 / NCTC 3887 / NRRL 1 / QM 1276 / 107).